A 186-amino-acid chain; its full sequence is Large ribosomal subunit protein uL5 (186 aa).

Belongs to the universal ribosomal protein uL5 family. As to quaternary structure, part of the 50S ribosomal subunit; part of the 5S rRNA/L5/L18/L25 subcomplex. Contacts the 5S rRNA and the P site tRNA. Forms a bridge to the 30S subunit in the 70S ribosome.

This is one of the proteins that bind and probably mediate the attachment of the 5S RNA into the large ribosomal subunit, where it forms part of the central protuberance. In the 70S ribosome it contacts protein S13 of the 30S subunit (bridge B1b), connecting the 2 subunits; this bridge is implicated in subunit movement. Contacts the P site tRNA; the 5S rRNA and some of its associated proteins might help stabilize positioning of ribosome-bound tRNAs. This is Large ribosomal subunit protein uL5 from Porphyromonas gingivalis (strain ATCC 33277 / DSM 20709 / CIP 103683 / JCM 12257 / NCTC 11834 / 2561).